The sequence spans 194 residues: RNA polymerase II subunit A C-terminal domain phosphatase SSU72 like protein 2 (194 aa).

This sequence belongs to the SSU72 phosphatase family.

The protein localises to the nucleus. The enzyme catalyses O-phospho-L-seryl-[protein] + H2O = L-seryl-[protein] + phosphate. The catalysed reaction is O-phospho-L-threonyl-[protein] + H2O = L-threonyl-[protein] + phosphate. Its function is as follows. Protein phosphatase that catalyzes the dephosphorylation of the C-terminal domain of RNA polymerase II. Plays a role in RNA processing and termination. The sequence is that of RNA polymerase II subunit A C-terminal domain phosphatase SSU72 like protein 2 from Homo sapiens (Human).